A 540-amino-acid chain; its full sequence is MNTSAPLQNVPNATLLNMPPLHGGNSTSLQEGLRDFIHTATLVTCTFLLAIIFCLGSYGNFIVFLSFFDPSFRKFRTNFDFMILNLSFCDLFICGVTAPMFTFVLFFSSASSIPDSFCFTFHLTSSGFVIMSLKMVAVIALHRLRMVMGKQPNCTASFSCILLLTLLLWATSFTLATLATLRTNKSHLCLPMSSLMDGEGKAILSLYVVDFTFCVAVVSVSYIMIAQTLRKNAQVKKCPPVITVDASRPQPFMGASVKGNGDPIQCTMPALYRNQNYNKLQHSQTHGYTKNINQMPIPSASRLQLVSAINFSTAKDSKAVVTCVVIVLSVLVCCLPLGISLVQMVLSDNGSFILYQFELFGFTLIFFKSGLNPFIYSRNSAGLRRKVLWCLRYTGLGFLCCKQKTRLRAMGKGNLEINRNKSSHHETNSAYMLSPKPQRKFVDQACGPSHSKESAASPKVSAGHQPCGQSSSTPINTRIEPYYSIYNSSPSQQESGPANLPPVNSFGFASSYIAMHYYTTNDLMQEYDSTSAKQIPIPSV.

Residues 1–46 (MNTSAPLQNVPNATLLNMPPLHGGNSTSLQEGLRDFIHTATLVTCT) are Extracellular-facing. 2 N-linked (GlcNAc...) asparagine glycosylation sites follow: Asn-2 and Asn-25. The chain crosses the membrane as a helical span at residues 47 to 67 (FLLAIIFCLGSYGNFIVFLSF). Residues 68–86 (FDPSFRKFRTNFDFMILNL) are Cytoplasmic-facing. Residues 87 to 107 (SFCDLFICGVTAPMFTFVLFF) traverse the membrane as a helical segment. At 108–120 (SSASSIPDSFCFT) the chain is on the extracellular side. The helical transmembrane segment at 121 to 141 (FHLTSSGFVIMSLKMVAVIAL) threads the bilayer. Over 142 to 160 (HRLRMVMGKQPNCTASFSC) the chain is Cytoplasmic. Residues 161-181 (ILLLTLLLWATSFTLATLATL) form a helical membrane-spanning segment. Topologically, residues 182–205 (RTNKSHLCLPMSSLMDGEGKAILS) are extracellular. The N-linked (GlcNAc...) asparagine glycan is linked to Asn-184. Residues 206–226 (LYVVDFTFCVAVVSVSYIMIA) traverse the membrane as a helical segment. The Cytoplasmic segment spans residues 227 to 318 (QTLRKNAQVK…INFSTAKDSK (92 aa)). The helical transmembrane segment at 319 to 339 (AVVTCVVIVLSVLVCCLPLGI) threads the bilayer. At 340–350 (SLVQMVLSDNG) the chain is on the extracellular side. A helical membrane pass occupies residues 351–371 (SFILYQFELFGFTLIFFKSGL). Residues 372–540 (NPFIYSRNSA…SAKQIPIPSV (169 aa)) lie on the Cytoplasmic side of the membrane. The interval 443 to 475 (DQACGPSHSKESAASPKVSAGHQPCGQSSSTPI) is disordered.

The protein belongs to the G-protein coupled receptor 1 family. In terms of tissue distribution, highly expressed in brain and heart. Also detected in skeletal muscle, liver and kidney. Also expressed by islet cells (at protein level).

Its subcellular location is the cell membrane. Functionally, g protein-coupled receptor that is activated by the chemokine CCL5/RANTES. Probably coupled to heterotrimeric Gq proteins, it stimulates inositol trisphosphate production and calcium mobilization upon activation. Together with CCL5/RANTES, may play a role in neuron survival through activation of a downstream signaling pathway involving the PI3, Akt and MAP kinases. CCL5/RANTES may also regulate insulin secretion by pancreatic islet cells through activation of this receptor. The sequence is that of Probable G-protein coupled receptor 75 (Gpr75) from Mus musculus (Mouse).